Consider the following 141-residue polypeptide: Hemoglobin subunit alpha-2 (141 aa).

The Globin domain occupies 1 to 141 (VLSSQDKANV…VKHVLTSKYR (141 aa)). His58 is a binding site for O2. His87 lines the heme b pocket.

It belongs to the globin family. Minor hemoglobin is a heterotetramer of two alpha-2 chains and two beta-2 chains. In terms of tissue distribution, red blood cells.

Its function is as follows. Involved in oxygen transport from the lung to the various peripheral tissues. The polypeptide is Hemoglobin subunit alpha-2 (Triturus cristatus (Great crested newt)).